A 2005-amino-acid chain; its full sequence is Chitin synthase 8 (2005 aa).

A Myosin motor domain is found at 5-773 (DEVAKLSQLT…AFRELEDELR (769 aa)). Residue 108 to 115 (GDTSSGKS) participates in ATP binding. N-linked (GlcNAc...) asparagine glycosylation is found at Asn164, Asn364, Asn390, and Asn546. A disordered region spans residues 585-631 (QSVKPMRAPSTRRPNRGNTIKRTNTIKKADDDDSDEDAADAADASTS). Residues 615-624 (DDDSDEDAAD) are compositionally biased toward acidic residues. The interval 647–669 (LDLLLETLEDTKTWFTLCLRPND) is actin-binding. Transmembrane regions (helical) follow at residues 929-949 (KWVA…LSRF) and 965-985 (LAIN…IVVL). The N-linked (GlcNAc...) asparagine glycan is linked to Asn1076. The next 3 helical transmembrane spans lie at 1232–1252 (ILLA…LAAL), 1604–1624 (LIFT…IVFI), and 1626–1646 (LLST…IVLV). Asn1650 is a glycosylation site (N-linked (GlcNAc...) asparagine). A run of 2 helical transmembrane segments spans residues 1653–1673 (VPLT…VIFL) and 1680–1700 (MIGW…FLPL). N-linked (GlcNAc...) asparagine glycans are attached at residues Asn1770 and Asn1794. A disordered region spans residues 1796 to 1821 (SFGHSPSPSYGGTPSQFGAFAPGPGS). A compositionally biased stretch (polar residues) spans 1797–1811 (FGHSPSPSYGGTPSQ). The N-linked (GlcNAc...) asparagine glycan is linked to Asn1882. A disordered region spans residues 1912-1950 (FATAEQQQQQQQQQQAAGLSGSGGSKSPPREAVAGGLPS). Residues 1917–1930 (QQQQQQQQQQAAGL) show a composition bias toward low complexity. Positions 1948–2003 (LPSDSQIKLDIRSLIAESDLTTITKKQLRAKLEQKYATSIESKKAFINSEIENVLS) constitute a DEK-C domain.

In the N-terminal section; belongs to the TRAFAC class myosin-kinesin ATPase superfamily. Myosin family. The protein in the C-terminal section; belongs to the chitin synthase family. Class V subfamily.

It is found in the cell membrane. The protein localises to the cytoplasmic vesicle membrane. Its subcellular location is the cell tip. The enzyme catalyses [(1-&gt;4)-N-acetyl-beta-D-glucosaminyl](n) + UDP-N-acetyl-alpha-D-glucosamine = [(1-&gt;4)-N-acetyl-beta-D-glucosaminyl](n+1) + UDP + H(+). Polymerizes chitin, a structural polymer of the cell wall and septum, by transferring the sugar moiety of UDP-GlcNAc to the non-reducing end of the growing chitin polymer. Involved in mating tube and dikaryotic hyphae formation and required for the formation of invading hyphae during plant infection. The polypeptide is Chitin synthase 8 (Mycosarcoma maydis (Corn smut fungus)).